Consider the following 331-residue polypeptide: DNA-directed RNA polymerase subunit alpha (331 aa).

The alpha N-terminal domain (alpha-NTD) stretch occupies residues 1–226 (MLIAQRPTLT…ELFGLCRELN (226 aa)). Residues 243–331 (TNPEMAVPIE…GGTFFSPEDE (89 aa)) form an alpha C-terminal domain (alpha-CTD) region.

This sequence belongs to the RNA polymerase alpha chain family. Homodimer. The RNAP catalytic core consists of 2 alpha, 1 beta, 1 beta' and 1 omega subunit. When a sigma factor is associated with the core the holoenzyme is formed, which can initiate transcription.

It catalyses the reaction RNA(n) + a ribonucleoside 5'-triphosphate = RNA(n+1) + diphosphate. Its function is as follows. DNA-dependent RNA polymerase catalyzes the transcription of DNA into RNA using the four ribonucleoside triphosphates as substrates. The protein is DNA-directed RNA polymerase subunit alpha of Bifidobacterium longum (strain NCC 2705).